Reading from the N-terminus, the 478-residue chain is Mannose-1-phosphate guanylyltransferase (478 aa).

This sequence belongs to the mannose-6-phosphate isomerase type 2 family.

It carries out the reaction alpha-D-mannose 1-phosphate + GTP + H(+) = GDP-alpha-D-mannose + diphosphate. The protein operates within nucleotide-sugar biosynthesis; GDP-alpha-D-mannose biosynthesis; GDP-alpha-D-mannose from alpha-D-mannose 1-phosphate (GTP route): step 1/1. In terms of biological role, involved in the biosynthesis of the capsular polysaccharide colanic acid. The polypeptide is Mannose-1-phosphate guanylyltransferase (manC) (Escherichia coli (strain K12)).